The chain runs to 858 residues: Heat shock protein 105 kDa (858 aa).

N-acetylserine is present on S2. At K471 the chain carries N6-acetyllysine. Disordered stretches follow at residues 500–584 (KVPT…PPEA) and 796–858 (CEPV…MDLD). A compositionally biased stretch (acidic residues) spans 504 to 514 (EENEMSSEADM). Residues S509 and S510 each carry the phosphoserine modification. A compositionally biased stretch (polar residues) spans 532-554 (QQDNSEAGTQPQVQTDAQQTSQS). Residue S557 is modified to Phosphoserine. Residue T561 is modified to Phosphothreonine. Basic and acidic residues-rich tracts occupy residues 563–584 (EENKIPDADKANEKKVDQPPEA) and 805–814 (PKIESPKLER). The residue at position 809 (S809) is a Phosphoserine. T815 bears the Phosphothreonine mark. Over residues 821-832 (IDKKEEDLEDKN) the composition is skewed to basic and acidic residues. Over residues 849–858 (EKNSVNMDLD) the composition is skewed to polar residues.

The protein belongs to the heat shock protein 70 family. In terms of assembly, interacts with HSPA8/HSC70. Interacts with HSPA1A (via NBD) and HSPA1B (via NBD). In terms of processing, phosphorylation on Ser-509 may be important for regulation of the HSPA8/HSC70 chaperone activity. Highly expressed in testis. Present at lower levels in most brain regions, except cerebellum. Overexpressed in cancer cells.

The protein resides in the cytoplasm. Its function is as follows. Acts as a nucleotide-exchange factor (NEF) for chaperone proteins HSPA1A and HSPA1B, promoting the release of ADP from HSPA1A/B thereby triggering client/substrate protein release. Prevents the aggregation of denatured proteins in cells under severe stress, on which the ATP levels decrease markedly. Inhibits HSPA8/HSC70 ATPase and chaperone activities. The sequence is that of Heat shock protein 105 kDa (HSPH1) from Homo sapiens (Human).